We begin with the raw amino-acid sequence, 456 residues long: Solute carrier family 49 member 4 homolog (456 aa).

Residues 1–29 (MGLEWSSPGERQPLLYPGGPRAPRVFGRR) are Cytoplasmic-facing. Residues 14–15 (LL) carry the Di-leucine motif; mediates lysosomal localization motif. Residues 30-50 (WLVLLLFSLLAFLQGLVWNSW) traverse the membrane as a helical segment. The Lumenal portion of the chain corresponds to 51–67 (GPIQNSARTAYNFSGLD). N-linked (GlcNAc...) asparagine glycosylation occurs at Asn62. Residues 68-88 (IALLVLWGPIGFLPCFLFMWL) traverse the membrane as a helical segment. Topologically, residues 89–95 (MDNRGLR) are cytoplasmic. A helical transmembrane segment spans residues 96–116 (VTVLLTALLMVLGAGLRCVPV). Topologically, residues 117 to 131 (QDLAVRRKLIHGGQL) are lumenal. The helical transmembrane segment at 132 to 152 (LNGFAGPTVMNAAPFLSTTWF) threads the bilayer. Residues 153 to 162 (SPDERATATA) lie on the Cytoplasmic side of the membrane. The chain crosses the membrane as a helical span at residues 163 to 183 (IASMLSYLGGACAFLVGPLVV). The Lumenal segment spans residues 184-207 (PAPNSTSGLLLYSGSVGAIRDRIE). The N-linked (GlcNAc...) asparagine glycan is linked to Asn187. Residues 208–228 (AVMYAEFGIIFVVFAAILAYF) traverse the membrane as a helical segment. The Cytoplasmic segment spans residues 229 to 259 (PSRPPVPPSVAAASRRLSYRTSILRLLSNVR). A helical transmembrane segment spans residues 260-280 (FLLIVLAYAIPLGFYAGWSGV). Over 281-292 (LDLILTPVHVTQ) the chain is Lumenal. Residues 293 to 313 (VDAGWVGFWSIVGGCVVGIAV) traverse the membrane as a helical segment. At 314-326 (GRFADSIRGVLKP) the chain is on the cytoplasmic side. Residues 327-347 (ILLLLFSGAALSSTWFTLTFL) form a helical membrane-spanning segment. Over 348–362 (SNVTHLPLTTATLYT) the chain is Lumenal. Asn349 carries N-linked (GlcNAc...) asparagine glycosylation. Residues 363 to 383 (SCILIGVFLSGTVPIFFEMFV) form a helical membrane-spanning segment. The Cytoplasmic segment spans residues 384–392 (ETVYPIPEG). A helical membrane pass occupies residues 393 to 413 (ITCGVVTFLSNLFMGVLLLFL). The Lumenal segment spans residues 414-420 (TLYQTNL). A glycan (N-linked (GlcNAc...) asparagine) is linked at Asn419. Residues 421–441 (SWLNWCLTGSCFLSLLFIACF) form a helical membrane-spanning segment. Residues 442-456 (RESYDRLYLDVFVSV) lie on the Cytoplasmic side of the membrane.

It belongs to the major facilitator superfamily.

Its subcellular location is the lysosome membrane. It catalyses the reaction pyridoxine(out) + n H(+)(out) = pyridoxine(in) + n H(+)(in). In terms of biological role, mediates H(+)-dependent pyridoxine transport. This Xenopus tropicalis (Western clawed frog) protein is Solute carrier family 49 member 4 homolog (slc49a4).